The sequence spans 261 residues: Cytochrome c oxidase subunit 3 (261 aa).

Residues methionine 1–proline 15 lie on the Mitochondrial matrix side of the membrane. A helical transmembrane segment spans residues tryptophan 16–tryptophan 34. At phenylalanine 35–threonine 40 the chain is on the mitochondrial intermembrane side. Residues threonine 41–threonine 66 traverse the membrane as a helical segment. The Mitochondrial matrix segment spans residues phenylalanine 67–threonine 72. A helical membrane pass occupies residues proline 73–serine 105. At leucine 106–glutamate 128 the chain is on the mitochondrial intermembrane side. The chain crosses the membrane as a helical span at residues valine 129 to methionine 152. Residues glutamate 153–asparagine 155 are Mitochondrial matrix-facing. Residues arginine 156 to glutamate 183 form a helical membrane-spanning segment. Residues alanine 184–aspartate 190 lie on the Mitochondrial intermembrane side of the membrane. The chain crosses the membrane as a helical span at residues glycine 191 to leucine 223. The Mitochondrial matrix portion of the chain corresponds to lysine 224 to histidine 232. A helical membrane pass occupies residues phenylalanine 233 to isoleucine 256. At tyrosine 257–serine 261 the chain is on the mitochondrial intermembrane side.

Belongs to the cytochrome c oxidase subunit 3 family. Component of the cytochrome c oxidase (complex IV, CIV), a multisubunit enzyme composed of 14 subunits. The complex is composed of a catalytic core of 3 subunits MT-CO1, MT-CO2 and MT-CO3, encoded in the mitochondrial DNA, and 11 supernumerary subunits COX4I, COX5A, COX5B, COX6A, COX6B, COX6C, COX7A, COX7B, COX7C, COX8 and NDUFA4, which are encoded in the nuclear genome. The complex exists as a monomer or a dimer and forms supercomplexes (SCs) in the inner mitochondrial membrane with NADH-ubiquinone oxidoreductase (complex I, CI) and ubiquinol-cytochrome c oxidoreductase (cytochrome b-c1 complex, complex III, CIII), resulting in different assemblies (supercomplex SCI(1)III(2)IV(1) and megacomplex MCI(2)III(2)IV(2)).

Its subcellular location is the mitochondrion inner membrane. It carries out the reaction 4 Fe(II)-[cytochrome c] + O2 + 8 H(+)(in) = 4 Fe(III)-[cytochrome c] + 2 H2O + 4 H(+)(out). Component of the cytochrome c oxidase, the last enzyme in the mitochondrial electron transport chain which drives oxidative phosphorylation. The respiratory chain contains 3 multisubunit complexes succinate dehydrogenase (complex II, CII), ubiquinol-cytochrome c oxidoreductase (cytochrome b-c1 complex, complex III, CIII) and cytochrome c oxidase (complex IV, CIV), that cooperate to transfer electrons derived from NADH and succinate to molecular oxygen, creating an electrochemical gradient over the inner membrane that drives transmembrane transport and the ATP synthase. Cytochrome c oxidase is the component of the respiratory chain that catalyzes the reduction of oxygen to water. Electrons originating from reduced cytochrome c in the intermembrane space (IMS) are transferred via the dinuclear copper A center (CU(A)) of subunit 2 and heme A of subunit 1 to the active site in subunit 1, a binuclear center (BNC) formed by heme A3 and copper B (CU(B)). The BNC reduces molecular oxygen to 2 water molecules using 4 electrons from cytochrome c in the IMS and 4 protons from the mitochondrial matrix. In Gazella bennettii (Chinkara), this protein is Cytochrome c oxidase subunit 3 (MT-CO3).